The sequence spans 157 residues: Cyclic pyranopterin monophosphate synthase (157 aa).

Substrate-binding positions include 74-76 (MCH) and 112-113 (ME). Residue aspartate 127 is part of the active site.

The protein belongs to the MoaC family. In terms of assembly, homohexamer; trimer of dimers.

It carries out the reaction (8S)-3',8-cyclo-7,8-dihydroguanosine 5'-triphosphate = cyclic pyranopterin phosphate + diphosphate. It functions in the pathway cofactor biosynthesis; molybdopterin biosynthesis. Catalyzes the conversion of (8S)-3',8-cyclo-7,8-dihydroguanosine 5'-triphosphate to cyclic pyranopterin monophosphate (cPMP). This chain is Cyclic pyranopterin monophosphate synthase, found in Campylobacter lari (strain RM2100 / D67 / ATCC BAA-1060).